We begin with the raw amino-acid sequence, 182 residues long: UPF0301 protein NMB1336 (182 aa).

This sequence belongs to the UPF0301 (AlgH) family.

The protein is UPF0301 protein NMB1336 of Neisseria meningitidis serogroup B (strain ATCC BAA-335 / MC58).